The following is a 444-amino-acid chain: ATPase PAAT (444 aa).

Phosphoserine occurs at positions 177, 182, 254, and 302. Positions 424 to 444 (PSPGMPLRHYDSRERLSNGER) are disordered. Basic and acidic residues predominate over residues 431–444 (RHYDSRERLSNGER).

In terms of assembly, homodimer. Interacts with ABCB7, ABCB8/MITOSUR and ABCB10.

The protein localises to the cytoplasm. It localises to the mitochondrion. The catalysed reaction is ATP + H2O = ADP + phosphate + H(+). In terms of biological role, ATPase that regulates mitochondrial ABC transporters ABCB7, ABCB8/MITOSUR and ABCB10. Regulates mitochondrial ferric concentration and heme biosynthesis and plays a role in the maintenance of mitochondrial homeostasis and cell survival. The chain is ATPase PAAT from Rattus norvegicus (Rat).